The sequence spans 394 residues: Phosphoglycerate kinase (394 aa).

Substrate-binding positions include 21–23 (DFN), R36, 59–62 (HLGR), R118, and R151. S183 is subject to Phosphoserine. Residues K201 and G292 each contribute to the ATP site. Phosphothreonine is present on T299. ATP contacts are provided by residues E323 and 350–353 (GGDS).

Belongs to the phosphoglycerate kinase family. Monomer.

The protein resides in the cytoplasm. It carries out the reaction (2R)-3-phosphoglycerate + ATP = (2R)-3-phospho-glyceroyl phosphate + ADP. It participates in carbohydrate degradation; glycolysis; pyruvate from D-glyceraldehyde 3-phosphate: step 2/5. This is Phosphoglycerate kinase from Anoxybacillus flavithermus (strain DSM 21510 / WK1).